The chain runs to 198 residues: Beta-crystallin A1 (198 aa).

Residues Met1–Ser13 form an N-terminal arm region. 2 Beta/gamma crystallin 'Greek key' domains span residues Ile14–Cys53 and Gly54–Cys100. 2 positions are modified to S-glutathionyl cysteine; alternate: Cys65 and Cys100. Residues Cys65 and Cys100 each carry the S-methylcysteine; alternate modification. The connecting peptide stretch occupies residues Ser101–Glu106. Beta/gamma crystallin 'Greek key' domains lie at Ser107–Cys148 and Gly149–Gln197.

This sequence belongs to the beta/gamma-crystallin family. As to quaternary structure, homo/heterodimer, or complexes of higher-order. The structure of beta-crystallin oligomers seems to be stabilized through interactions between the N-terminal arms. Interacts with CRYBA1.

Functionally, crystallins are the dominant structural components of the vertebrate eye lens. The sequence is that of Beta-crystallin A1 from Mus musculus (Mouse).